We begin with the raw amino-acid sequence, 179 residues long: tRNA-splicing endonuclease (179 aa).

Residues Y115, H123, and K154 contribute to the active site.

Belongs to the tRNA-intron endonuclease family. Archaeal short subfamily. In terms of assembly, homotetramer; although the tetramer contains four active sites, only two participate in the cleavage. Therefore, it should be considered as a dimer of dimers.

It catalyses the reaction pretRNA = a 3'-half-tRNA molecule with a 5'-OH end + a 5'-half-tRNA molecule with a 2',3'-cyclic phosphate end + an intron with a 2',3'-cyclic phosphate and a 5'-hydroxyl terminus.. Functionally, endonuclease that removes tRNA introns. Cleaves pre-tRNA at the 5'- and 3'-splice sites to release the intron. The products are an intron and two tRNA half-molecules bearing 2',3' cyclic phosphate and 5'-OH termini. Recognizes a pseudosymmetric substrate in which 2 bulged loops of 3 bases are separated by a stem of 4 bp. This is tRNA-splicing endonuclease from Methanopyrus kandleri (strain AV19 / DSM 6324 / JCM 9639 / NBRC 100938).